The following is a 50-amino-acid chain: Sperm protamine P1 (50 aa).

Belongs to the protamine P1 family. As to expression, testis.

It localises to the nucleus. The protein localises to the chromosome. Protamines substitute for histones in the chromatin of sperm during the haploid phase of spermatogenesis. They compact sperm DNA into a highly condensed, stable and inactive complex. The chain is Sperm protamine P1 (PRM1) from Trachypithecus vetulus (Purple-faced langur).